The sequence spans 65 residues: Large ribosomal subunit protein uL29 (65 aa).

Belongs to the universal ribosomal protein uL29 family.

This is Large ribosomal subunit protein uL29 from Bacteroides thetaiotaomicron (strain ATCC 29148 / DSM 2079 / JCM 5827 / CCUG 10774 / NCTC 10582 / VPI-5482 / E50).